We begin with the raw amino-acid sequence, 104 residues long: NADH-quinone oxidoreductase subunit K (104 aa).

A run of 3 helical transmembrane segments spans residues 4-24 (VAYY…AFLI), 28-48 (IITI…SFVA), and 64-84 (IFVF…LAII).

This sequence belongs to the complex I subunit 4L family. In terms of assembly, NDH-1 is composed of 14 different subunits. Subunits NuoA, H, J, K, L, M, N constitute the membrane sector of the complex.

The protein localises to the cell inner membrane. It carries out the reaction a quinone + NADH + 5 H(+)(in) = a quinol + NAD(+) + 4 H(+)(out). In terms of biological role, NDH-1 shuttles electrons from NADH, via FMN and iron-sulfur (Fe-S) centers, to quinones in the respiratory chain. The immediate electron acceptor for the enzyme in this species is believed to be ubiquinone. Couples the redox reaction to proton translocation (for every two electrons transferred, four hydrogen ions are translocated across the cytoplasmic membrane), and thus conserves the redox energy in a proton gradient. The protein is NADH-quinone oxidoreductase subunit K of Acidobacterium capsulatum (strain ATCC 51196 / DSM 11244 / BCRC 80197 / JCM 7670 / NBRC 15755 / NCIMB 13165 / 161).